A 655-amino-acid polypeptide reads, in one-letter code: Ribonuclease 3 (655 aa).

Disordered regions lie at residues 1–148 (MENL…NSEK) and 171–376 (LIAP…NIPL). The tract at residues 1–400 (MENLEKNTKK…NYIKDNYPVI (400 aa)) is unknown. A compositionally biased stretch (basic residues) spans 8–20 (TKKKIKKPNNFKK). Basic and acidic residues-rich tracts occupy residues 21–34 (NNKDKTEELKDKPT) and 69–89 (DYEKKIREIQAKEAKKIRSDE). Over residues 92–102 (NNNSKKQNNNK) the composition is skewed to low complexity. Residues 103-115 (QAKKKANKNKKQK) are compositionally biased toward basic residues. Residues 135–148 (AANNQVKAIPNSEK) are compositionally biased toward polar residues. Low complexity predominate over residues 206-223 (NNFVNNQKNHNKNNAGNK). 2 stretches are compositionally biased toward polar residues: residues 229 to 242 (PTKPLNQSKLSKST) and 250 to 259 (PNFTSNQPKP). 2 stretches are compositionally biased toward basic and acidic residues: residues 260 to 274 (TQKEDSKKVKAKKAE) and 298 to 309 (DQTKKKQPKENK). The segment covering 310–332 (NQQIKAVNLNNNQQKTNNNNQKN) has biased composition (low complexity). The segment covering 333–350 (SVDKSENDNNKKKSEANQ) has biased composition (basic and acidic residues). Over residues 351–360 (KQENLNPNNN) the composition is skewed to low complexity. Residues 401-655 (YADLKEKNRL…KFRGLLKLEK (255 aa)) form an RNase 3 region. Residues 432 to 556 (LELLLKKFKV…FIGAMYLDQG (125 aa)) form the RNase III domain. A Mg(2+)-binding site is contributed by Glu-472. Residue Asp-476 is part of the active site. Mg(2+) is bound by residues Asp-542 and Glu-545. The active site involves Glu-545. Residues 582–649 (DYKSIFQEII…AKEAISKFRG (68 aa)) form the DRBM domain.

Belongs to the ribonuclease III family. Homodimer. It depends on Mg(2+) as a cofactor.

The protein localises to the cytoplasm. The catalysed reaction is Endonucleolytic cleavage to 5'-phosphomonoester.. Functionally, digests double-stranded RNA. Involved in the processing of primary rRNA transcript to yield the immediate precursors to the large and small rRNAs (23S and 16S). Processes some mRNAs, and tRNAs when they are encoded in the rRNA operon. Processes pre-crRNA and tracrRNA of type II CRISPR loci if present in the organism. In Mycoplasmoides gallisepticum (strain R(low / passage 15 / clone 2)) (Mycoplasma gallisepticum), this protein is Ribonuclease 3 (rnc).